The following is a 222-amino-acid chain: Protein THYLAKOID ASSEMBLY 8, chloroplastic (222 aa).

A chloroplast-targeting transit peptide spans methionine 1–arginine 32. PPR repeat units lie at residues aspartate 115–serine 149 and aspartate 150–serine 184.

The protein belongs to the PPR family. P subfamily.

The protein localises to the plastid. It is found in the chloroplast thylakoid membrane. Functionally, essential protein required during embryogenesis. Mediates group II organellar RNA introns splicing (e.g. ycf3-2 and trnA). Binds weakly to specific RNA. Promotes the biogenesis of chloroplast thylakoid membranes. This is Protein THYLAKOID ASSEMBLY 8, chloroplastic from Arabidopsis thaliana (Mouse-ear cress).